Reading from the N-terminus, the 159-residue chain is Ornithine decarboxylase antizyme (159 aa).

The protein belongs to the ODC antizyme family. Interacts with ODC1 and thereby sterically blocks ODC homodimerization.

In terms of biological role, ornithine decarboxylase (ODC) antizyme protein that negatively regulates ODC activity and intracellular polyamine biosynthesis and uptake in response to increased intracellular polyamine levels. Binds to ODC monomers, inhibiting the assembly of the functional ODC homodimer, and targets the monomers for ubiquitin-independent proteolytic destruction by the 26S proteasome. The polypeptide is Ornithine decarboxylase antizyme (Caenorhabditis elegans).